Here is a 335-residue protein sequence, read N- to C-terminus: NADH-quinone oxidoreductase subunit H (335 aa).

Transmembrane regions (helical) follow at residues 15 to 35 (VVKA…LSFV), 81 to 101 (MIFT…FSII), 114 to 134 (IGLL…LFAG), 154 to 174 (VSYE…VGSF), 187 to 207 (LWFI…GVAV), 238 to 258 (FFVG…TLFF), 270 to 290 (QVPF…FILL), and 307 to 327 (WKFC…IVLY).

Belongs to the complex I subunit 1 family. As to quaternary structure, NDH-1 is composed of 13 different subunits. Subunits NuoA, H, J, K, L, M, N constitute the membrane sector of the complex.

Its subcellular location is the cell inner membrane. The catalysed reaction is a quinone + NADH + 5 H(+)(in) = a quinol + NAD(+) + 4 H(+)(out). Its function is as follows. NDH-1 shuttles electrons from NADH, via FMN and iron-sulfur (Fe-S) centers, to quinones in the respiratory chain. The immediate electron acceptor for the enzyme in this species is believed to be ubiquinone. Couples the redox reaction to proton translocation (for every two electrons transferred, four hydrogen ions are translocated across the cytoplasmic membrane), and thus conserves the redox energy in a proton gradient. This subunit may bind ubiquinone. The sequence is that of NADH-quinone oxidoreductase subunit H from Pseudomonas putida (strain GB-1).